Here is a 446-residue protein sequence, read N- to C-terminus: NADH-ubiquinone oxidoreductase chain 4 (446 aa).

A run of 13 helical transmembrane segments spans residues 4 to 24 (IILFLLFLTPVCFINNMYWMV), 56 to 76 (MLSYGLVLLSLWICSLMLLAS), 93 to 113 (IVILLLLLVLTFSSMSLFMFY), 114 to 134 (LFFESSLIPTLFLILGWGYQP), 141 to 161 (VYLLFYTLLVSLPMLIGIFYV), 182 to 202 (LLYFCLLCAFLVKMPMFLVHL), 212 to 232 (PVSGSMILAGIMLKLGGYGLL), 245 to 265 (YSFVWISISLVGGVLMSLVCL), 272 to 292 (ALIAYSSVAHMGIVLAGLLTM), 297 to 317 (LCGSYTLMIAHGLCSSGLFCL), 330 to 350 (MLINKGLLNFMPAMTLWWFLL), 373 to 393 (IVSWSWISMIMLSFLSFFSAA), and 426 to 446 (LLHWLPLNLLILKSESCILWL).

It belongs to the complex I subunit 4 family.

The protein resides in the mitochondrion membrane. The enzyme catalyses a ubiquinone + NADH + 5 H(+)(in) = a ubiquinol + NAD(+) + 4 H(+)(out). In terms of biological role, core subunit of the mitochondrial membrane respiratory chain NADH dehydrogenase (Complex I) that is believed to belong to the minimal assembly required for catalysis. Complex I functions in the transfer of electrons from NADH to the respiratory chain. The immediate electron acceptor for the enzyme is believed to be ubiquinone. In Drosophila yakuba (Fruit fly), this protein is NADH-ubiquinone oxidoreductase chain 4 (mt:ND4).